We begin with the raw amino-acid sequence, 174 residues long: Recombination protein RecR (174 aa).

The segment at C30–C45 adopts a C4-type zinc-finger fold. In terms of domain architecture, Toprim spans G54–P149.

Belongs to the RecR family.

Functionally, may play a role in DNA repair. It seems to be involved in an RecBC-independent recombinational process of DNA repair. It may act with RecF and RecO. In Haemophilus ducreyi (strain 35000HP / ATCC 700724), this protein is Recombination protein RecR.